Here is a 443-residue protein sequence, read N- to C-terminus: Probable lysophospholipase BODYGUARD 5 (443 aa).

An N-terminal signal peptide occupies residues 1 to 52 (MITSSFSEKCTSVINGAPSWAVFFLFDLLDYFLCIVFRFLDEVMEEKSESCH). A lipid anchor (N-palmitoyl cysteine) is attached at C53. Residues 163–268 (VIFVHGFLAS…VKSVALVAPP (106 aa)) form the AB hydrolase-1 domain. Residue H167 is part of the active site. S242 acts as the Nucleophile in catalysis. Catalysis depends on charge relay system residues D387 and H415.

The protein resides in the cell membrane. Its subcellular location is the secreted. The protein localises to the cell wall. Involved in cuticle development and morphogenesis. This chain is Probable lysophospholipase BODYGUARD 5, found in Arabidopsis thaliana (Mouse-ear cress).